A 156-amino-acid chain; its full sequence is SsrA-binding protein (156 aa).

It belongs to the SmpB family.

The protein localises to the cytoplasm. Functionally, required for rescue of stalled ribosomes mediated by trans-translation. Binds to transfer-messenger RNA (tmRNA), required for stable association of tmRNA with ribosomes. tmRNA and SmpB together mimic tRNA shape, replacing the anticodon stem-loop with SmpB. tmRNA is encoded by the ssrA gene; the 2 termini fold to resemble tRNA(Ala) and it encodes a 'tag peptide', a short internal open reading frame. During trans-translation Ala-aminoacylated tmRNA acts like a tRNA, entering the A-site of stalled ribosomes, displacing the stalled mRNA. The ribosome then switches to translate the ORF on the tmRNA; the nascent peptide is terminated with the 'tag peptide' encoded by the tmRNA and targeted for degradation. The ribosome is freed to recommence translation, which seems to be the essential function of trans-translation. The polypeptide is SsrA-binding protein (Bacillus pumilus (strain SAFR-032)).